A 178-amino-acid polypeptide reads, in one-letter code: Large ribosomal subunit protein bL25 (178 aa).

It belongs to the bacterial ribosomal protein bL25 family. CTC subfamily. As to quaternary structure, part of the 50S ribosomal subunit; part of the 5S rRNA/L5/L18/L25 subcomplex. Contacts the 5S rRNA. Binds to the 5S rRNA independently of L5 and L18.

This is one of the proteins that binds to the 5S RNA in the ribosome where it forms part of the central protuberance. The protein is Large ribosomal subunit protein bL25 of Nitratiruptor sp. (strain SB155-2).